A 450-amino-acid polypeptide reads, in one-letter code: DNA primase DnaG (450 aa).

The region spanning 199–273 (DSIIVVEGRA…DVDYVARAPE (75 aa)) is the Toprim domain. The Mg(2+) site is built by E205, D247, and D249. Basic and acidic residues predominate over residues 320-348 (APSKEVKPAPKHEPKPQPVEQKPREEKII). The tract at residues 320–350 (APSKEVKPAPKHEPKPQPVEQKPREEKIIRP) is disordered.

This sequence belongs to the archaeal DnaG primase family. Forms a ternary complex with MCM helicase and DNA. Component of the archaeal exosome complex. The cofactor is Mg(2+).

It carries out the reaction ssDNA + n NTP = ssDNA/pppN(pN)n-1 hybrid + (n-1) diphosphate.. RNA polymerase that catalyzes the synthesis of short RNA molecules used as primers for DNA polymerase during DNA replication. Also part of the exosome, which is a complex involved in RNA degradation. Acts as a poly(A)-binding protein that enhances the interaction between heteromeric, adenine-rich transcripts and the exosome. This is DNA primase DnaG from Thermococcus gammatolerans (strain DSM 15229 / JCM 11827 / EJ3).